The sequence spans 574 residues: Ankyrin repeat protein B19 (574 aa).

ANK repeat units follow at residues 56-87, 135-164, 167-213, 217-249, 253-285, and 327-356; these read TGYTALHCYLYNNYFTNDVLKILLNHGVDVTM, IKSRYMLLKEEDIDENIVSTLLDKGIDPNF, DGYT…NLNA, CGNTPFHLYLSIEMCNNIHMTKMLLTFNPNFEI, HGLTPILCYITSDYIQHDILVMLIHHYETNVGE, and EGKTLLHVACEYNNTHVIDYLIRINGDINA. The 34-residue stretch at 541–574 folds into the F-box domain; sequence NCLLTLLPSEIIYEILYMLTINDLYNISYPPTKV.

The protein belongs to the poxvirinae B18 protein family.

The polypeptide is Ankyrin repeat protein B19 (Vaccinia virus (strain Western Reserve) (VACV)).